The following is a 212-amino-acid chain: Transcriptional repressor CcpN (212 aa).

In terms of domain architecture, HTH deoR-type spans 6–70 (LNKRQEHILQ…FYTGKTGTQL (65 aa)). Residues 23-42 (ITGEHIAEKLNLTRATLRPD) constitute a DNA-binding region (H-T-H motif). CBS domains lie at 83–139 (FQSI…QQEL) and 148–211 (MTRM…ENEI).

Transcription repressor that binds to the promoter of gapB and pckA genes, preventing their expression. Acts as a regulator for catabolite repression of gluconeogenic genes. The polypeptide is Transcriptional repressor CcpN (ccpN) (Bacillus subtilis (strain 168)).